Here is a 569-residue protein sequence, read N- to C-terminus: Sulfite reductase [NADPH] hemoprotein beta-component (569 aa).

C433, C439, C478, and C482 together coordinate [4Fe-4S] cluster. C482 is a binding site for siroheme.

It belongs to the nitrite and sulfite reductase 4Fe-4S domain family. Alpha(8)-beta(8). The alpha component is a flavoprotein, the beta component is a hemoprotein. It depends on siroheme as a cofactor. Requires [4Fe-4S] cluster as cofactor.

The enzyme catalyses hydrogen sulfide + 3 NADP(+) + 3 H2O = sulfite + 3 NADPH + 4 H(+). The protein operates within sulfur metabolism; hydrogen sulfide biosynthesis; hydrogen sulfide from sulfite (NADPH route): step 1/1. Its function is as follows. Component of the sulfite reductase complex that catalyzes the 6-electron reduction of sulfite to sulfide. This is one of several activities required for the biosynthesis of L-cysteine from sulfate. In Shewanella sediminis (strain HAW-EB3), this protein is Sulfite reductase [NADPH] hemoprotein beta-component.